A 422-amino-acid polypeptide reads, in one-letter code: MVLHQQRFSLDHGAFCQTLAQTENLLIVQDLDGVCMELVQDPLSRRLDADYVRATTLFAEHFYVLTNGEHVGKRGVQGIVEQSFGDASFVQQEGLYLPGLAAGGVQWQDRHGKVSHPGVGQTELEFLAAVPEKITNCLKTFFGDRPHSLSPEQLQTGIEASVLDNVASPTANLNTLANLLQDFPQIYRDLQETMAQLLDQLMAEAVAQGLGNSFFVHYAPNLGRDERGKEIIRWAKAGDSGTTDFQFMLRGGVKEAGVLALLNRYYHNRTGQYPLGESFSARQAPPSHQDLLHLVKAQFDPALMPLIIGVGDTVTSQVDEATGEIRRGGSDRQFLQLIQDLGDWGNHGNLVVYVDSSQGEVKNRQPLQLETVAGQTQVVAGPGDMRDREEPLKINVAFPGGHDQYVAAFKQAAQRRRVHFSQ.

Catalysis depends on aspartate 403, which acts as the Proton donor.

The protein belongs to the histidine acid phosphatase family. In terms of assembly, monomer. Interacts with GGPS.

The catalysed reaction is 2-O-(alpha-D-glucopyranosyl)-sn-glycerol 3-phosphate + H2O = 2-O-(alpha-D-glucopyranosyl)glycerol + phosphate. Functionally, phosphorylates glucosylglycerol-phosphate the precursor of the osmoprotectant glucosylglycerol necessary for salt adaptation of Synechocystis. In Synechocystis sp. (strain ATCC 27184 / PCC 6803 / Kazusa), this protein is Glucosylglycerol-phosphate phosphatase (stpA).